Here is a 266-residue protein sequence, read N- to C-terminus: NAD kinase 2 (266 aa).

Catalysis depends on Asp-51, which acts as the Proton acceptor. Residues 51–52, 123–124, Arg-150, Asp-152, 163–168, and Ala-187 each bind NAD(+); these read DG, NE, and TGYSKS.

Belongs to the NAD kinase family. Requires a divalent metal cation as cofactor.

The protein resides in the cytoplasm. The catalysed reaction is NAD(+) + ATP = ADP + NADP(+) + H(+). Its function is as follows. Involved in the regulation of the intracellular balance of NAD and NADP, and is a key enzyme in the biosynthesis of NADP. Catalyzes specifically the phosphorylation on 2'-hydroxyl of the adenosine moiety of NAD to yield NADP. The sequence is that of NAD kinase 2 from Oceanobacillus iheyensis (strain DSM 14371 / CIP 107618 / JCM 11309 / KCTC 3954 / HTE831).